The chain runs to 347 residues: ATP-dependent (S)-NAD(P)H-hydrate dehydratase (347 aa).

A YjeF C-terminal domain is found at 53 to 344 (TLQLVRNIIP…AEVGAAFSKL (292 aa)). The residue at position 85 (Tyr85) is a Phosphotyrosine. (6S)-NADPHX contacts are provided by residues Gly153 and 206–212 (NHVEFSR). The N-linked (GlcNAc...) asparagine glycan is linked to Asn240. Residues 246–250 (KGERD) and 265–274 (GSSRRCGGQG) contribute to the ATP site. Residue Asp275 coordinates (6S)-NADPHX. N-linked (GlcNAc...) asparagine glycosylation is present at Asn297.

It belongs to the NnrD/CARKD family. The cofactor is Mg(2+).

The protein localises to the mitochondrion. It carries out the reaction (6S)-NADHX + ATP = ADP + phosphate + NADH + H(+). The catalysed reaction is (6S)-NADPHX + ATP = ADP + phosphate + NADPH + H(+). Functionally, catalyzes the dehydration of the S-form of NAD(P)HX at the expense of ATP, which is converted to ADP. Together with NAD(P)HX epimerase, which catalyzes the epimerization of the S- and R-forms, the enzyme allows the repair of both epimers of NAD(P)HX, a damaged form of NAD(P)H that is a result of enzymatic or heat-dependent hydration. This is ATP-dependent (S)-NAD(P)H-hydrate dehydratase from Homo sapiens (Human).